Consider the following 238-residue polypeptide: Ribonuclease PH (238 aa).

Residues Arg86 and Gly124–Arg126 contribute to the phosphate site.

This sequence belongs to the RNase PH family. Homohexameric ring arranged as a trimer of dimers.

The enzyme catalyses tRNA(n+1) + phosphate = tRNA(n) + a ribonucleoside 5'-diphosphate. In terms of biological role, phosphorolytic 3'-5' exoribonuclease that plays an important role in tRNA 3'-end maturation. Removes nucleotide residues following the 3'-CCA terminus of tRNAs; can also add nucleotides to the ends of RNA molecules by using nucleoside diphosphates as substrates, but this may not be physiologically important. Probably plays a role in initiation of 16S rRNA degradation (leading to ribosome degradation) during starvation. This chain is Ribonuclease PH, found in Trichlorobacter lovleyi (strain ATCC BAA-1151 / DSM 17278 / SZ) (Geobacter lovleyi).